We begin with the raw amino-acid sequence, 422 residues long: Ameloblastin (422 aa).

Residues 1 to 26 (MSASKIPLFKMKGLLLFLSLVKMSLA) form the signal peptide. Residue proline 42 is modified to Hydroxyproline. Serine 48 bears the Phosphoserine mark. An O-linked (GalNAc...) serine glycan is attached at serine 117. The segment at 271–321 (GLNQNSPKGGDFTVEVDSPVSVTKGPEKGEGPEGSPLQEASPDKGENPALL) is disordered.

It belongs to the ameloblastin family. As to expression, ameloblast-specific.

It localises to the secreted. The protein resides in the extracellular space. It is found in the extracellular matrix. In terms of biological role, involved in the mineralization and structural organization of enamel. The sequence is that of Ameloblastin (Ambn) from Rattus norvegicus (Rat).